Consider the following 473-residue polypeptide: Putative protein TIC 214 C-terminal part (473 aa).

This sequence belongs to the TIC214 family. As to quaternary structure, part of the Tic complex.

Its subcellular location is the plastid. The protein resides in the chloroplast. Its function is as follows. Involved in protein precursor import into chloroplasts. May be part of an intermediate translocation complex acting as a protein-conducting channel at the inner envelope. This chain is Putative protein TIC 214 C-terminal part, found in Anthoceros angustus (Hornwort).